Reading from the N-terminus, the 294-residue chain is Cytidine deaminase (294 aa).

CMP/dCMP-type deaminase domains lie at 48–168 and 186–294; these read DEDA…FGPK and LTGD…VLLG. 89–91 is a binding site for substrate; the sequence is NME. Zn(2+) is bound at residue histidine 102. Glutamate 104 acts as the Proton donor in catalysis. Cysteine 129 and cysteine 132 together coordinate Zn(2+).

The protein belongs to the cytidine and deoxycytidylate deaminase family. In terms of assembly, homodimer. Requires Zn(2+) as cofactor.

It carries out the reaction cytidine + H2O + H(+) = uridine + NH4(+). The enzyme catalyses 2'-deoxycytidine + H2O + H(+) = 2'-deoxyuridine + NH4(+). In terms of biological role, this enzyme scavenges exogenous and endogenous cytidine and 2'-deoxycytidine for UMP synthesis. The polypeptide is Cytidine deaminase (Escherichia fergusonii (strain ATCC 35469 / DSM 13698 / CCUG 18766 / IAM 14443 / JCM 21226 / LMG 7866 / NBRC 102419 / NCTC 12128 / CDC 0568-73)).